We begin with the raw amino-acid sequence, 309 residues long: Homoserine kinase (309 aa).

91 to 101 (PIGSGLGSSAC) contacts ATP.

It belongs to the GHMP kinase family. Homoserine kinase subfamily.

It localises to the cytoplasm. It catalyses the reaction L-homoserine + ATP = O-phospho-L-homoserine + ADP + H(+). It participates in amino-acid biosynthesis; L-threonine biosynthesis; L-threonine from L-aspartate: step 4/5. Its function is as follows. Catalyzes the ATP-dependent phosphorylation of L-homoserine to L-homoserine phosphate. This is Homoserine kinase from Cronobacter sakazakii (strain ATCC BAA-894) (Enterobacter sakazakii).